Reading from the N-terminus, the 436-residue chain is Elongation factor 1-gamma-A (436 aa).

The GST N-terminal domain maps to 2-87 (AGGTLYTYPD…YVGNDELRGT (86 aa)). The GST C-terminal domain maps to 88-221 (TRLHQAQVIQ…KMAQFDAKKF (134 aa)). 2 stretches are compositionally biased toward basic and acidic residues: residues 221–249 (FAEMQPKKETPKKEKPAKEPKKEKEEKKK) and 265–278 (SEKALAAEPKSKDP). A disordered region spans residues 221–278 (FAEMQPKKETPKKEKPAKEPKKEKEEKKKAAPTPAPAPEDDLDESEKALAAEPKSKDP). Positions 275-436 (SKDPYAHLPK…KPFNQGKIFK (162 aa)) constitute an EF-1-gamma C-terminal domain.

EF-1 is composed of four subunits: alpha, beta, delta, and gamma. Phosphorylated by CDK1. Post-translationally, the N-terminus is blocked.

Probably plays a role in anchoring the complex to other cellular components. The chain is Elongation factor 1-gamma-A (eef1g-a) from Xenopus laevis (African clawed frog).